Here is a 341-residue protein sequence, read N- to C-terminus: tRNA N6-adenosine threonylcarbamoyltransferase (341 aa).

Positions 114 and 118 each coordinate Fe cation. Residues 136–140 (LVSGG), D169, G182, D186, and N278 contribute to the substrate site. D304 lines the Fe cation pocket.

This sequence belongs to the KAE1 / TsaD family. Fe(2+) is required as a cofactor.

The protein localises to the cytoplasm. It catalyses the reaction L-threonylcarbamoyladenylate + adenosine(37) in tRNA = N(6)-L-threonylcarbamoyladenosine(37) in tRNA + AMP + H(+). Required for the formation of a threonylcarbamoyl group on adenosine at position 37 (t(6)A37) in tRNAs that read codons beginning with adenine. Is involved in the transfer of the threonylcarbamoyl moiety of threonylcarbamoyl-AMP (TC-AMP) to the N6 group of A37, together with TsaE and TsaB. TsaD likely plays a direct catalytic role in this reaction. This is tRNA N6-adenosine threonylcarbamoyltransferase from Lactococcus lactis subsp. cremoris (strain MG1363).